The following is a 528-amino-acid chain: Glutamate--cysteine ligase (528 aa).

This sequence belongs to the glutamate--cysteine ligase type 1 family. Type 1 subfamily.

It catalyses the reaction L-cysteine + L-glutamate + ATP = gamma-L-glutamyl-L-cysteine + ADP + phosphate + H(+). The protein operates within sulfur metabolism; glutathione biosynthesis; glutathione from L-cysteine and L-glutamate: step 1/2. The chain is Glutamate--cysteine ligase from Janthinobacterium sp. (strain Marseille) (Minibacterium massiliensis).